The chain runs to 586 residues: Kelch-like protein 7 (586 aa).

One can recognise a BTB domain in the interval Cys-44 to Ser-111. Positions Cys-146–Gln-248 constitute a BACK domain. 6 Kelch repeats span residues Arg-294 to Asn-336, Val-337 to Gly-382, Lys-383 to Gly-430, Leu-431 to Asp-481, Ile-483 to Ser-528, and Ile-530 to Asp-575.

In terms of assembly, homodimer. Component of the BCR(KLHL7) E3 ubiquitin ligase complex, at least composed of CUL3 and KLHL7 and RBX1.

The protein localises to the nucleus. It localises to the cytoplasm. Its pathway is protein modification; protein ubiquitination. Functionally, substrate-specific adapter of a BCR (BTB-CUL3-RBX1) E3 ubiquitin ligase complex. The BCR(KLHL7) complex acts by mediating ubiquitination and subsequent degradation of substrate proteins. Probably mediates 'Lys-48'-linked ubiquitination. This is Kelch-like protein 7 (Klhl7) from Mus musculus (Mouse).